Reading from the N-terminus, the 214-residue chain is Alpha-S1-casein (214 aa).

Positions 1 to 15 (MKLLILTCLVAVALA) are cleaved as a signal peptide. Phosphoserine occurs at positions 63, 79, 81, 82, 83, and 90. 2 consecutive repeats follow at residues 85-99 (EIVPISVEQKHIQKE) and 125-140 (EIVPNLAEEQLHSMKE).

This sequence belongs to the alpha-casein family. As to expression, mammary gland specific. Secreted in milk.

The protein localises to the secreted. Functionally, important role in the capacity of milk to transport calcium phosphate. This chain is Alpha-S1-casein (CSN1S1), found in Bubalus bubalis (Domestic water buffalo).